Here is a 154-residue protein sequence, read N- to C-terminus: Crossover junction endodeoxyribonuclease RuvC (154 aa).

Catalysis depends on residues aspartate 7, glutamate 67, and aspartate 139. Positions 7, 67, and 139 each coordinate Mg(2+).

Belongs to the RuvC family. In terms of assembly, homodimer which binds Holliday junction (HJ) DNA. The HJ becomes 2-fold symmetrical on binding to RuvC with unstacked arms; it has a different conformation from HJ DNA in complex with RuvA. In the full resolvosome a probable DNA-RuvA(4)-RuvB(12)-RuvC(2) complex forms which resolves the HJ. The cofactor is Mg(2+).

It is found in the cytoplasm. It carries out the reaction Endonucleolytic cleavage at a junction such as a reciprocal single-stranded crossover between two homologous DNA duplexes (Holliday junction).. The RuvA-RuvB-RuvC complex processes Holliday junction (HJ) DNA during genetic recombination and DNA repair. Endonuclease that resolves HJ intermediates. Cleaves cruciform DNA by making single-stranded nicks across the HJ at symmetrical positions within the homologous arms, yielding a 5'-phosphate and a 3'-hydroxyl group; requires a central core of homology in the junction. The consensus cleavage sequence is 5'-(A/T)TT(C/G)-3'. Cleavage occurs on the 3'-side of the TT dinucleotide at the point of strand exchange. HJ branch migration catalyzed by RuvA-RuvB allows RuvC to scan DNA until it finds its consensus sequence, where it cleaves and resolves the cruciform DNA. The protein is Crossover junction endodeoxyribonuclease RuvC of Parasynechococcus marenigrum (strain WH8102).